The primary structure comprises 72 residues: Translation initiation factor IF-1 (72 aa).

The region spanning 1-72 (MAKEDNIEMQ…SKGRIVFRSR (72 aa)) is the S1-like domain.

The protein belongs to the IF-1 family. In terms of assembly, component of the 30S ribosomal translation pre-initiation complex which assembles on the 30S ribosome in the order IF-2 and IF-3, IF-1 and N-formylmethionyl-tRNA(fMet); mRNA recruitment can occur at any time during PIC assembly.

It localises to the cytoplasm. One of the essential components for the initiation of protein synthesis. Stabilizes the binding of IF-2 and IF-3 on the 30S subunit to which N-formylmethionyl-tRNA(fMet) subsequently binds. Helps modulate mRNA selection, yielding the 30S pre-initiation complex (PIC). Upon addition of the 50S ribosomal subunit IF-1, IF-2 and IF-3 are released leaving the mature 70S translation initiation complex. In Shewanella pealeana (strain ATCC 700345 / ANG-SQ1), this protein is Translation initiation factor IF-1.